Reading from the N-terminus, the 116-residue chain is UPF0298 protein EF_2453 (116 aa).

This sequence belongs to the UPF0298 family.

It localises to the cytoplasm. This is UPF0298 protein EF_2453 from Enterococcus faecalis (strain ATCC 700802 / V583).